A 2771-amino-acid polypeptide reads, in one-letter code: Teneurin-4 (2771 aa).

Residues 1-22 show a composition bias toward basic and acidic residues; it reads MDVKERKPYRSLTRRRDAERRY. The tract at residues 1 to 45 is disordered; that stretch reads MDVKERKPYRSLTRRRDAERRYTSSSADSEEGKGPQKSYSSSETL. Residues 1–341 form the Teneurin N-terminal domain; it reads MDVKERKPYR…KPSKYCNWKC (341 aa). Topologically, residues 1 to 345 are cytoplasmic; it reads MDVKERKPYR…YCNWKCAALS (345 aa). Phosphoserine is present on Ser124. The disordered stretch occupies residues 132–233; that stretch reads WGRSTRSGRS…PPAGSAQEPT (102 aa). Residues 134-155 are compositionally biased toward low complexity; sequence RSTRSGRSSCLSSRANSNLTLT. Residues 156–166 show a composition bias toward basic and acidic residues; sequence DTEHENTETDH. Thr178 is modified (phosphothreonine). A compositionally biased stretch (polar residues) spans 191–211; that stretch reads QHHAASINSLNRGNFTPRSNP. The helical transmembrane segment at 346–366 threads the bilayer; it reads AILISATLVILLAYFVAMHLF. Residues 367 to 2771 are Extracellular-facing; it reads GLNWHLQPME…FMRQSEMGRR (2405 aa). Residues 403 to 428 form a disordered region; that stretch reads SGGTGLETPDRKGKGAAEGKPSSLFP. Positions 410–419 are enriched in basic and acidic residues; the sequence is TPDRKGKGAA. An N-linked (GlcNAc...) asparagine glycan is attached at Asn469. A disordered region spans residues 509–528; that stretch reads ARSLEGPQRQSRGPVPPSSH. 8 consecutive EGF-like domains span residues 564–595, 596–626, 628–660, 661–692, 694–727, 728–759, 760–789, and 790–833; these read SVDN…PDCG, RASC…AECD, PTNQ…ESCE, EVDC…TNCE, PRAT…HDCS, IEIC…ACDQ, RACH…EHCT, and IAHY…TGCD. Intrachain disulfides connect Cys568-Cys578, Cys572-Cys583, Cys585-Cys594, Cys603-Cys614, Cys616-Cys625, Cys632-Cys643, Cys637-Cys648, Cys650-Cys659, Cys664-Cys675, Cys669-Cys680, Cys682-Cys691, Cys702-Cys715, Cys717-Cys726, Cys731-Cys741, Cys735-Cys746, Cys748-Cys757, Cys762-Cys772, Cys766-Cys777, Cys779-Cys788, Cys802-Cys812, Cys806-Cys821, and Cys823-Cys832. 2 N-linked (GlcNAc...) asparagine glycosylation sites follow: Asn942 and Asn1261. 5 NHL repeats span residues 1218–1261, 1266–1310, 1336–1380, 1395–1446, and 1525–1568; these read SCPS…PSGN, LEMR…VKST, TRCG…NGII, LSCD…VAGR, and CFSG…IRKN. The YD 1 repeat unit spans residues 1578 to 1597; that stretch reads YELSSPIDQELYLFDTSGKH. Residue Asn1611 is glycosylated (N-linked (GlcNAc...) asparagine). 3 YD repeats span residues 1614–1634, 1677–1696, and 1697–1719; these read YTGD…VNVR, YHGN…WTTF, and YEYD…SSFR. Asn1707, Asn1743, Asn1801, and Asn1886 each carry an N-linked (GlcNAc...) asparagine glycan. YD repeat units lie at residues 1889–1908, 1930–1948, 1949–1969, 1976–1993, 1994–2015, 2016–2033, 2036–2056, 2059–2079, 2087–2106, 2112–2129, 2130–2156, 2158–2171, 2172–2195, 2198–2218, 2219–2239, 2241–2261, 2273–2293, and 2295–2315; these read YSPG…ERME, YLEK…YIFE, FDKN…QTLE, YYRN…VIQD, FTED…VIYK, YGKL…TKVS, YDET…FTCT, YRQI…EGMV, YDNS…TPLP, YDDV…GVIY, YDIN…MKEV, YEIF…MTVQ, YDNM…TRYS, YDAD…WRYS, YDLN…LTPL, YDLR…DEDG, YNSA…SVRY, and YDGL…LQFF. A glycan (N-linked (GlcNAc...) asparagine) is linked at Asn1987. N-linked (GlcNAc...) asparagine glycosylation is present at Asn2190. An N-linked (GlcNAc...) asparagine glycan is attached at Asn2330. Residues 2341-2382 form a YD 23 repeat; the sequence is YDLQGHLFAMELSSGDEFYIACDNIGTPLAVFSGTGLMIKQI. N-linked (GlcNAc...) asparagine glycosylation is present at Asn2648.

The protein belongs to the tenascin family. Teneurin subfamily. Homodimer; disulfide-linked. May also form heterodimer with either TENM1 or TENM2 or TENM3. In terms of tissue distribution, expressed in brain and spinal cord (at protein level). Expressed in neurons and oligodendrocytes of the spinal cord. Expressed weakly in kidney, lung and spleen. Expressed in the cortex, CA1, CA2 and CA3 of the hippocampus. Expressed in the white matter, Purkinje cells and molecular layer of the cerebellum.

It is found in the cell membrane. It localises to the cell projection. The protein resides in the nucleus. Its subcellular location is the cytoplasm. Involved in neural development, regulating the establishment of proper connectivity within the nervous system. Plays a role in the establishment of the anterior-posterior axis during gastrulation. Regulates the differentiation and cellular process formation of oligodendrocytes and myelination of small-diameter axons in the central nervous system (CNS). Promotes activation of focal adhesion kinase. May function as a cellular signal transducer. The protein is Teneurin-4 (Tenm4) of Mus musculus (Mouse).